The chain runs to 668 residues: Threonine--tRNA ligase (668 aa).

The 64-residue stretch at 1–64 (MSQAISLTFP…TDGKIEIITR (64 aa)) folds into the TGS domain. The catalytic stretch occupies residues 245-553 (DHRKLGREMD…LIENFAGHMP (309 aa)). Residues Cys347, His398, and His530 each coordinate Zn(2+).

This sequence belongs to the class-II aminoacyl-tRNA synthetase family. As to quaternary structure, homodimer. Requires Zn(2+) as cofactor.

The protein resides in the cytoplasm. The enzyme catalyses tRNA(Thr) + L-threonine + ATP = L-threonyl-tRNA(Thr) + AMP + diphosphate + H(+). In terms of biological role, catalyzes the attachment of threonine to tRNA(Thr) in a two-step reaction: L-threonine is first activated by ATP to form Thr-AMP and then transferred to the acceptor end of tRNA(Thr). Also edits incorrectly charged L-seryl-tRNA(Thr). The chain is Threonine--tRNA ligase from Rhizobium etli (strain CIAT 652).